We begin with the raw amino-acid sequence, 206 residues long: MSALANRRARVERKTKESEIVVDLDLDGTGVVDIDTGVPFFDHMLTSLGSHASFDLTVHAKGDIEIEGHHTVEDTAIVLGQALGQALGDKKGIRRFGDAFIPMDESLAHAAVDVSGRPYFVHTGEPESMVSFTIAGTGAPYHTVINRHVFESLAFNARIALHVRTLYGRDPHHITEAQYKAVARALRQAVEYDARVTGVPSTKGTL.

This sequence belongs to the imidazoleglycerol-phosphate dehydratase family.

It is found in the cytoplasm. The enzyme catalyses D-erythro-1-(imidazol-4-yl)glycerol 3-phosphate = 3-(imidazol-4-yl)-2-oxopropyl phosphate + H2O. The protein operates within amino-acid biosynthesis; L-histidine biosynthesis; L-histidine from 5-phospho-alpha-D-ribose 1-diphosphate: step 6/9. The polypeptide is Imidazoleglycerol-phosphate dehydratase (Mycolicibacterium smegmatis (strain ATCC 700084 / mc(2)155) (Mycobacterium smegmatis)).